The primary structure comprises 358 residues: Methylthioribose-1-phosphate isomerase (358 aa).

Residues 54–56, Arg96, and Gln205 contribute to the substrate site; that span reads RGA. Catalysis depends on Asp246, which acts as the Proton donor. 256–257 provides a ligand contact to substrate; sequence NK.

The protein belongs to the eIF-2B alpha/beta/delta subunits family. MtnA subfamily.

It carries out the reaction 5-(methylsulfanyl)-alpha-D-ribose 1-phosphate = 5-(methylsulfanyl)-D-ribulose 1-phosphate. It participates in amino-acid biosynthesis; L-methionine biosynthesis via salvage pathway; L-methionine from S-methyl-5-thio-alpha-D-ribose 1-phosphate: step 1/6. In terms of biological role, catalyzes the interconversion of methylthioribose-1-phosphate (MTR-1-P) into methylthioribulose-1-phosphate (MTRu-1-P). The polypeptide is Methylthioribose-1-phosphate isomerase (Ectopseudomonas mendocina (strain ymp) (Pseudomonas mendocina)).